Here is a 172-residue protein sequence, read N- to C-terminus: Outer-membrane lipoprotein carrier protein (172 aa).

A signal peptide spans 1–16 (MRIALLWVAFGALALA).

Belongs to the LolA family. As to quaternary structure, monomer.

The protein localises to the periplasm. Participates in the translocation of lipoproteins from the inner membrane to the outer membrane. Only forms a complex with a lipoprotein if the residue after the N-terminal Cys is not an aspartate (The Asp acts as a targeting signal to indicate that the lipoprotein should stay in the inner membrane). The protein is Outer-membrane lipoprotein carrier protein of Wolinella succinogenes (strain ATCC 29543 / DSM 1740 / CCUG 13145 / JCM 31913 / LMG 7466 / NCTC 11488 / FDC 602W) (Vibrio succinogenes).